Here is a 451-residue protein sequence, read N- to C-terminus: MREIVHIQAGQCGNQIGAKFWEVISDEHGVDPTGAYHGDSDLQLERINVYYNEATGGRYVPRAILMDLEPGTMDSVRAGPYGQIFRPDNFVFGQTGAGNNWAKGHYTEGAELIDSVLDVVRKEAESCDCLQGFQIAHSLGGGTGSGMGTLLISKIREEYPDRMMMTFSVFPSPKVSDTVVEPYNATLSVHQLVENADEVMCIDNEALYDICFRTLKLTTPTFGDLNHLVSIVMSGVTCCLRFPGQLNSDLRKLAVNLIPFPRLHFFLIGFAPLTSRGSQQYRALTVPELTQQMFDAKNMMAASDPRHGRYLTASAMFRGRMSTKEVDEQMLNVQNKNSSYFVEWIPNNIKSSVCDIPPRGLKMAATFIGNSTAIQEMFKRVSEQFTAMFRRKAFLHWYTGEGMDEMEFTEAESNMNDLVSEYQQYQDATAEEEGEFDENEGAEGEEQPADY.

The GTP site is built by Gln11, Glu69, Ser138, Gly142, Thr143, Gly144, Asn204, and Asn226. Glu69 lines the Mg(2+) pocket. The tract at residues 426 to 451 is disordered; that stretch reads QDATAEEEGEFDENEGAEGEEQPADY. A compositionally biased stretch (acidic residues) spans 429 to 451; the sequence is TAEEEGEFDENEGAEGEEQPADY.

This sequence belongs to the tubulin family. As to quaternary structure, dimer of alpha and beta chains. A typical microtubule is a hollow water-filled tube with an outer diameter of 25 nm and an inner diameter of 15 nM. Alpha-beta heterodimers associate head-to-tail to form protofilaments running lengthwise along the microtubule wall with the beta-tubulin subunit facing the microtubule plus end conferring a structural polarity. Microtubules usually have 13 protofilaments but different protofilament numbers can be found in some organisms and specialized cells. It depends on Mg(2+) as a cofactor.

The protein resides in the cytoplasm. It localises to the cytoskeleton. Tubulin is the major constituent of microtubules, a cylinder consisting of laterally associated linear protofilaments composed of alpha- and beta-tubulin heterodimers. Microtubules grow by the addition of GTP-tubulin dimers to the microtubule end, where a stabilizing cap forms. Below the cap, tubulin dimers are in GDP-bound state, owing to GTPase activity of alpha-tubulin. This Naegleria pringsheimi (Amoeba) protein is Tubulin beta chain.